The following is a 356-amino-acid chain: Glutamine synthetase (356 aa).

The GS beta-grasp domain maps to 19-99 (VIAEYIWIGG…VICDTYTPAG (81 aa)). The GS catalytic domain occupies 106–356 (KRHGAAKIFS…IAETTLLWKP (251 aa)).

This sequence belongs to the glutamine synthetase family. As to quaternary structure, homooctamer. As to expression, found at highest levels in root nodules.

The protein resides in the cytoplasm. The enzyme catalyses L-glutamate + NH4(+) + ATP = L-glutamine + ADP + phosphate + H(+). This is Glutamine synthetase (GLN1) from Alnus glutinosa (European alder).